Reading from the N-terminus, the 1505-residue chain is Probable serine/threonine-protein kinase irlD (1505 aa).

Positions 1-18 (MGPKKGKRSHSKNHHHHN) are enriched in basic residues. Disordered regions lie at residues 1–30 (MGPK…NSGG), 121–211 (IPQP…NNIL), 548–571 (TTTT…DKEN), and 862–1013 (EENE…TIAT). Residues 139-158 (SISTTTTTTTATAIEIESSS) show a composition bias toward low complexity. Polar residues predominate over residues 159–172 (GLTSNITDSTEIQL). 2 stretches are compositionally biased toward low complexity: residues 173 to 209 (DSTT…NSNN) and 548 to 561 (TTTT…TTTT). Composition is skewed to basic and acidic residues over residues 562 to 571 (IDKDEKDKEN) and 862 to 882 (EENE…EKKK). Positions 846–892 (IRTEESLKAEKDLLEQEENEKKRLKEKRKKEEKEKKKQQNLKQKSLI) form a coiled coil. The span at 896 to 924 (TTTTTTTTPIPITVPIPTQTQTPTQTPTQ) shows a compositional bias: low complexity. The segment covering 925 to 943 (TPIPTPIPTTPIPTTPIPI) has biased composition (pro residues). Low complexity-rich tracts occupy residues 944-954 (PIQLTPTTPKT) and 960-977 (TPKT…KTPK). Over residues 978-989 (NSTLDKQTISTP) the composition is skewed to polar residues. Positions 1054-1324 (RKDEFIIGRG…TENILLHPFF (271 aa)) constitute a Protein kinase domain. Residues 1060 to 1068 (IGRGSNGTL) and Lys-1083 contribute to the ATP site. The active-site Proton acceptor is Asp-1194. The 179-residue stretch at 1327 to 1505 (HEKKVKFIDA…LIYFNDLIIK (179 aa)) folds into the KEN domain.

The protein belongs to the protein kinase superfamily. Ser/Thr protein kinase family.

It catalyses the reaction L-seryl-[protein] + ATP = O-phospho-L-seryl-[protein] + ADP + H(+). It carries out the reaction L-threonyl-[protein] + ATP = O-phospho-L-threonyl-[protein] + ADP + H(+). In Dictyostelium discoideum (Social amoeba), this protein is Probable serine/threonine-protein kinase irlD (irlD).